A 341-amino-acid chain; its full sequence is ATPase GET3 (341 aa).

34-41 is a binding site for ATP; sequence KGGVGKTT. Asp63 is an active-site residue. ATP contacts are provided by Glu245 and Asn272. Residues Cys283 and Cys286 each coordinate Zn(2+).

It belongs to the arsA ATPase family. In terms of assembly, homodimer.

The protein resides in the cytoplasm. It is found in the endoplasmic reticulum. In terms of biological role, ATPase required for the post-translational delivery of tail-anchored (TA) proteins to the endoplasmic reticulum. Recognizes and selectively binds the transmembrane domain of TA proteins in the cytosol. This complex then targets to the endoplasmic reticulum by membrane-bound receptors, where the tail-anchored protein is released for insertion. This process is regulated by ATP binding and hydrolysis. ATP binding drives the homodimer towards the closed dimer state, facilitating recognition of newly synthesized TA membrane proteins. ATP hydrolysis is required for insertion. Subsequently, the homodimer reverts towards the open dimer state, lowering its affinity for the membrane-bound receptor, and returning it to the cytosol to initiate a new round of targeting. The protein is ATPase GET3 of Ajellomyces capsulatus (strain G186AR / H82 / ATCC MYA-2454 / RMSCC 2432) (Darling's disease fungus).